The chain runs to 90 residues: Small ribosomal subunit protein bS16 (90 aa).

Belongs to the bacterial ribosomal protein bS16 family.

This Lactobacillus delbrueckii subsp. bulgaricus (strain ATCC 11842 / DSM 20081 / BCRC 10696 / JCM 1002 / NBRC 13953 / NCIMB 11778 / NCTC 12712 / WDCM 00102 / Lb 14) protein is Small ribosomal subunit protein bS16.